The following is a 449-amino-acid chain: tRNA-2-methylthio-N(6)-dimethylallyladenosine synthase (449 aa).

The 116-residue stretch at 4–119 (RTFHIETFGC…APQALDRLVE (116 aa)) folds into the MTTase N-terminal domain. [4Fe-4S] cluster is bound by residues cysteine 13, cysteine 48, cysteine 82, cysteine 158, cysteine 162, and cysteine 165. The Radical SAM core domain occupies 144–375 (GAVPASVFVN…QTLQNRLTER (232 aa)). The 69-residue stretch at 378 to 446 (QDMVGKKVEV…KHSLLAEQAG (69 aa)) folds into the TRAM domain.

The protein belongs to the methylthiotransferase family. MiaB subfamily. Monomer. [4Fe-4S] cluster serves as cofactor.

It localises to the cytoplasm. It catalyses the reaction N(6)-dimethylallyladenosine(37) in tRNA + (sulfur carrier)-SH + AH2 + 2 S-adenosyl-L-methionine = 2-methylsulfanyl-N(6)-dimethylallyladenosine(37) in tRNA + (sulfur carrier)-H + 5'-deoxyadenosine + L-methionine + A + S-adenosyl-L-homocysteine + 2 H(+). Functionally, catalyzes the methylthiolation of N6-(dimethylallyl)adenosine (i(6)A), leading to the formation of 2-methylthio-N6-(dimethylallyl)adenosine (ms(2)i(6)A) at position 37 in tRNAs that read codons beginning with uridine. The sequence is that of tRNA-2-methylthio-N(6)-dimethylallyladenosine synthase from Nitratidesulfovibrio vulgaris (strain DP4) (Desulfovibrio vulgaris).